The following is a 336-amino-acid chain: Glycerol-3-phosphate dehydrogenase [NAD(P)+] (336 aa).

NADPH is bound by residues Trp-11, Arg-33, and Lys-105. 3 residues coordinate sn-glycerol 3-phosphate: Lys-105, Gly-141, and Ser-143. Ala-145 serves as a coordination point for NADPH. Lys-196, Asp-249, Ser-259, Arg-260, and Asn-261 together coordinate sn-glycerol 3-phosphate. The Proton acceptor role is filled by Lys-196. Arg-260 is an NADPH binding site. The NADPH site is built by Val-284 and Glu-286.

Belongs to the NAD-dependent glycerol-3-phosphate dehydrogenase family.

It localises to the cytoplasm. The catalysed reaction is sn-glycerol 3-phosphate + NAD(+) = dihydroxyacetone phosphate + NADH + H(+). The enzyme catalyses sn-glycerol 3-phosphate + NADP(+) = dihydroxyacetone phosphate + NADPH + H(+). The protein operates within membrane lipid metabolism; glycerophospholipid metabolism. Functionally, catalyzes the reduction of the glycolytic intermediate dihydroxyacetone phosphate (DHAP) to sn-glycerol 3-phosphate (G3P), the key precursor for phospholipid synthesis. The protein is Glycerol-3-phosphate dehydrogenase [NAD(P)+] of Delftia acidovorans (strain DSM 14801 / SPH-1).